Consider the following 566-residue polypeptide: Beta-1,2-xylosyltransferease XAX1 (566 aa).

Residues 1–25 (MTSTAYSRPSKLPGGGNGSDRRLPP) are disordered. Over 1–43 (MTSTAYSRPSKLPGGGNGSDRRLPPRLMRGLTTKIEPKKLGVG) the chain is Cytoplasmic. The chain crosses the membrane as a helical; Signal-anchor for type II membrane protein span at residues 44–64 (LLAGCCLALLTYVSLAKLFAI). The Lumenal segment spans residues 65-566 (YSPVFASTAN…LLQALDRLQQ (502 aa)). The N-linked (GlcNAc...) asparagine glycan is linked to N74. Positions 78-180 (LMQNSPPSSP…AAGGDTKIKC (103 aa)) are disordered. A compositionally biased stretch (pro residues) spans 84–94 (PSSPETGPIPP). N-linked (GlcNAc...) asparagine glycans are attached at residues N104, N368, N429, N515, and N549.

Belongs to the glycosyltransferase 61 family. As to expression, highly expressed in young panicles.

It is found in the golgi apparatus membrane. It functions in the pathway glycan metabolism. Glycosyltransferase involved in the xylosylation of xylan, the major hemicellulose (non-cellulosic component) of primary and secondary walls of angiosperms. Possesses beta-1,2-xylosyltransferase activity, transferring xylose from UDP-xylose to the xylan backbone. The protein is Beta-1,2-xylosyltransferease XAX1 of Oryza sativa subsp. japonica (Rice).